The sequence spans 127 residues: Large ribosomal subunit protein bL21 (127 aa).

The segment at 102-127 (TDNAKPTKGPRPKKAKAEAPAADAAE) is disordered.

Belongs to the bacterial ribosomal protein bL21 family. In terms of assembly, part of the 50S ribosomal subunit. Contacts protein L20.

Its function is as follows. This protein binds to 23S rRNA in the presence of protein L20. The protein is Large ribosomal subunit protein bL21 of Bradyrhizobium sp. (strain BTAi1 / ATCC BAA-1182).